The chain runs to 296 residues: Nucleotide-binding protein spr1424 (296 aa).

13–20 (GMGGAGKT) contacts ATP. 63–66 (DMRS) contacts GTP.

It belongs to the RapZ-like family.

Functionally, displays ATPase and GTPase activities. The sequence is that of Nucleotide-binding protein spr1424 from Streptococcus pneumoniae (strain ATCC BAA-255 / R6).